The following is a 323-amino-acid chain: tRNA dimethylallyltransferase (323 aa).

12–19 (GPTAAGKT) provides a ligand contact to ATP. 14–19 (TAAGKT) lines the substrate pocket. Interaction with substrate tRNA stretches follow at residues 37 to 40 (DSAL) and 161 to 165 (QRLIR).

The protein belongs to the IPP transferase family. In terms of assembly, monomer. The cofactor is Mg(2+).

It catalyses the reaction adenosine(37) in tRNA + dimethylallyl diphosphate = N(6)-dimethylallyladenosine(37) in tRNA + diphosphate. In terms of biological role, catalyzes the transfer of a dimethylallyl group onto the adenine at position 37 in tRNAs that read codons beginning with uridine, leading to the formation of N6-(dimethylallyl)adenosine (i(6)A). The chain is tRNA dimethylallyltransferase from Pseudomonas putida (strain GB-1).